The sequence spans 188 residues: Molybdopterin synthase catalytic subunit (188 aa).

S20 carries the post-translational modification Phosphoserine. Substrate-binding positions include 143 to 144 (HR), K159, and 166 to 168 (KKE).

The protein belongs to the MoaE family. MOCS2B subfamily. Heterotetramer; composed of 2 small (MOCS2A) and 2 large (MOCS2B) subunits. As to expression, highest levels are found in heart and skeletal muscle. Lower levels are present in brain, kidney and pancreas. Very low levels are found in lung and peripheral blood leukocytes.

It is found in the cytoplasm. The protein resides in the cytosol. The catalysed reaction is 2 [molybdopterin-synthase sulfur-carrier protein]-C-terminal-Gly-aminoethanethioate + cyclic pyranopterin phosphate + H2O = molybdopterin + 2 [molybdopterin-synthase sulfur-carrier protein]-C-terminal Gly-Gly + 2 H(+). The protein operates within cofactor biosynthesis; molybdopterin biosynthesis. In terms of biological role, catalytic subunit of the molybdopterin synthase complex, a complex that catalyzes the conversion of precursor Z into molybdopterin. Acts by mediating the incorporation of 2 sulfur atoms from thiocarboxylated MOCS2A into precursor Z to generate a dithiolene group. The chain is Molybdopterin synthase catalytic subunit from Homo sapiens (Human).